A 56-amino-acid chain; its full sequence is Preprotein translocase subunit SecG (56 aa).

Residues 1–29 (MAKEKATLPPTGAGLMRFFDEDTRAVKVS) lie on the Cytoplasmic side of the membrane. A helical transmembrane segment spans residues 30–49 (PKGVIALTLLLIAFEFILHM). Residues 50 to 56 (FGSSIFG) are Extracellular-facing.

It belongs to the SEC61-beta family. As to quaternary structure, component of the protein translocase complex. Heterotrimer consisting of alpha (SecY), beta (SecG) and gamma (SecE) subunits. Can form oligomers of the heterotrimer.

It is found in the cell membrane. Its function is as follows. Involved in protein export. The function of the beta subunit is unknown, but it may be involved in stabilization of the trimeric complex. The protein is Preprotein translocase subunit SecG of Thermococcus kodakarensis (strain ATCC BAA-918 / JCM 12380 / KOD1) (Pyrococcus kodakaraensis (strain KOD1)).